The primary structure comprises 100 residues: Osteocalcin (100 aa).

Positions 1 to 23 (MRALTLLALLALATLCITGQAGA) are cleaved as a signal peptide. The propeptide occupies 24–51 (KPSGAESSKGAAFVSKQEGSEVVKRPRR). The region spanning 52–98 (YLYQWLGAPAPYPDPLEPKREVCELNPDCDELADHIGFQEAYRRFYG) is the Gla domain. A 4-hydroxyproline modification is found at P60. Ca(2+) is bound by residues E68, E72, E75, and D81. 3 positions are modified to 4-carboxyglutamate: E68, E72, and E75. A disulfide bridge connects residues C74 and C80.

It belongs to the osteocalcin/matrix Gla protein family. In terms of processing, gamma-carboxyglutamate residues are formed by vitamin K dependent carboxylation by GGCX. These residues are essential for the binding of calcium. Decarboxylation promotes the hormone activity.

Its subcellular location is the secreted. Functionally, the carboxylated form is one of the main organic components of the bone matrix, which constitutes 1-2% of the total bone protein: it acts as a negative regulator of bone formation and is required to limit bone formation without impairing bone resorption or mineralization. The carboxylated form binds strongly to apatite and calcium. In terms of biological role, the uncarboxylated form acts as a hormone secreted by osteoblasts, which regulates different cellular processes, such as energy metabolism, male fertility and brain development. Regulates of energy metabolism by acting as a hormone favoring pancreatic beta-cell proliferation, insulin secretion and sensitivity and energy expenditure. Uncarboxylated osteocalcin hormone also promotes testosterone production in the testes: acts as a ligand for G protein-coupled receptor GPRC6A at the surface of Leydig cells, initiating a signaling response that promotes the expression of enzymes required for testosterone synthesis in a CREB-dependent manner. Also acts as a regulator of brain development: osteocalcin hormone crosses the blood-brain barrier and acts as a ligand for GPR158 on neurons, initiating a signaling response that prevents neuronal apoptosis in the hippocampus, favors the synthesis of all monoamine neurotransmitters and inhibits that of gamma-aminobutyric acid (GABA). Osteocalcin also crosses the placenta during pregnancy and maternal osteocalcin is required for fetal brain development. The polypeptide is Osteocalcin (BGLAP) (Macaca mulatta (Rhesus macaque)).